Consider the following 94-residue polypeptide: Small ribosomal subunit protein uS19 (94 aa).

Belongs to the universal ribosomal protein uS19 family.

In terms of biological role, protein S19 forms a complex with S13 that binds strongly to the 16S ribosomal RNA. In Caldicellulosiruptor saccharolyticus (strain ATCC 43494 / DSM 8903 / Tp8T 6331), this protein is Small ribosomal subunit protein uS19.